Reading from the N-terminus, the 101-residue chain is NAD(P)H-quinone oxidoreductase subunit 4L, chloroplastic (101 aa).

Helical transmembrane passes span 2 to 22 (MLEHVLVLSAYLFSIGIYGLI), 32 to 52 (MCLELILNAVNINLVTFSDLF), and 61 to 81 (IFSIFVIAIAAAEAAIGPAIV).

It belongs to the complex I subunit 4L family. As to quaternary structure, NDH is composed of at least 16 different subunits, 5 of which are encoded in the nucleus.

The protein resides in the plastid. The protein localises to the chloroplast thylakoid membrane. It catalyses the reaction a plastoquinone + NADH + (n+1) H(+)(in) = a plastoquinol + NAD(+) + n H(+)(out). The enzyme catalyses a plastoquinone + NADPH + (n+1) H(+)(in) = a plastoquinol + NADP(+) + n H(+)(out). NDH shuttles electrons from NAD(P)H:plastoquinone, via FMN and iron-sulfur (Fe-S) centers, to quinones in the photosynthetic chain and possibly in a chloroplast respiratory chain. The immediate electron acceptor for the enzyme in this species is believed to be plastoquinone. Couples the redox reaction to proton translocation, and thus conserves the redox energy in a proton gradient. This is NAD(P)H-quinone oxidoreductase subunit 4L, chloroplastic from Illicium oligandrum (Star anise).